The primary structure comprises 423 residues: Imidazolonepropionase (423 aa).

Positions 78 and 80 each coordinate Fe(3+). Histidine 78 and histidine 80 together coordinate Zn(2+). Arginine 87, tyrosine 150, and histidine 183 together coordinate 4-imidazolone-5-propanoate. Tyrosine 150 serves as a coordination point for N-formimidoyl-L-glutamate. Histidine 247 is a Fe(3+) binding site. Histidine 247 contacts Zn(2+). Glutamate 250 is a binding site for 4-imidazolone-5-propanoate. Aspartate 322 contacts Fe(3+). Zn(2+) is bound at residue aspartate 322. N-formimidoyl-L-glutamate-binding residues include asparagine 324 and glycine 326. Residue serine 327 coordinates 4-imidazolone-5-propanoate.

Belongs to the metallo-dependent hydrolases superfamily. HutI family. It depends on Zn(2+) as a cofactor. Requires Fe(3+) as cofactor.

It localises to the cytoplasm. It carries out the reaction 4-imidazolone-5-propanoate + H2O = N-formimidoyl-L-glutamate. Its pathway is amino-acid degradation; L-histidine degradation into L-glutamate; N-formimidoyl-L-glutamate from L-histidine: step 3/3. Functionally, catalyzes the hydrolytic cleavage of the carbon-nitrogen bond in imidazolone-5-propanoate to yield N-formimidoyl-L-glutamate. It is the third step in the universal histidine degradation pathway. The chain is Imidazolonepropionase from Bacillus cereus (strain ZK / E33L).